An 805-amino-acid polypeptide reads, in one-letter code: Rho GTPase-activating protein 42 (805 aa).

The 256-residue stretch at 7–262 folds into the BAR domain; it reads EFSDSFLDSP…IRSAEQDFKA (256 aa). Positions 225 to 262 form a coiled coil; the sequence is KQQLQFNLQNTRNNFESTRQEVENLMRRIRSAEQDFKA. One can recognise a PH domain in the interval 265–374; that stretch reads QWTMEGFLYV…WMEAMDGKEP (110 aa). Residues 376–572 enclose the Rho-GAP domain; the sequence is YTLPALLSKK…ILIENYDKIF (197 aa). Disordered regions lie at residues 576 to 600, 625 to 725, and 765 to 805; these read PDPNVPLPHPQSHSQSRGGARRSKA, SDTF…SELL, and VSRS…PGSV. Positions 626 to 654 are enriched in low complexity; it reads DTFSSSPSSTPMGSMESLSSHSSEQNSCS. The segment covering 670–693 has biased composition (polar residues); sequence LCWTTPSPSTNGPKSPACTTSPDS. Over residues 694–704 the composition is skewed to basic and acidic residues; it reads SSKEDANKTDG. Residues 710 to 721 are compositionally biased toward polar residues; sequence LSTSPGDRSSPA. Residues 782–793 show a composition bias toward basic and acidic residues; that stretch reads PPKDGMRFRDDS.

May influence blood pressure by functioning as a GTPase-activating protein in vascular smooth muscle. This Danio rerio (Zebrafish) protein is Rho GTPase-activating protein 42.